The sequence spans 513 residues: MQLNSTEISELIKKRIAQFNVVSEAQSTGTIVSVSDGVIRIHGLADVMQGEMIALPGNRYAIALNLERDSVGAVVMGPYADLAEGMEVKCTGRILEVPVGRGLLGRVVNTLGQPIDGKGEIDNDGFSPIEVIAPGVIDRQSVDQPVQTGYKAVDSMVPIGRGQRELIIGDRQTGKTALAIDAIINQRDSGIKCIYVAIGQKASTISNVVRKLEEHGALQNTIVVVASASESAALQYLAPYAGCAMGEYFRDRGEDALIVYDDLSKQAVAYRQISLLLRRPPGREAYPGDVFYLHSRLLERAARVNADYVERFTNGAVKGQTGSLTALPIIETQAGDVSAFVPTNVISITDGQIFLETSFFNAGIRPAVNPGISVSRVGGSAQTKLVKKLAGGIRTALAQYRELAAFAQFASDLDDATRKQLSHGQKVTELLKQKQFEPMSVAQLGLSLAAAEFGYLDDVEVERVGSFESNLLAYANANYAEFMKDLSKSGDFNDTIKAKLIEILDSFKKNSAW.

An ATP-binding site is contributed by 169-176 (GDRQTGKT).

This sequence belongs to the ATPase alpha/beta chains family. In terms of assembly, F-type ATPases have 2 components, CF(1) - the catalytic core - and CF(0) - the membrane proton channel. CF(1) has five subunits: alpha(3), beta(3), gamma(1), delta(1), epsilon(1). CF(0) has three main subunits: a(1), b(2) and c(9-12). The alpha and beta chains form an alternating ring which encloses part of the gamma chain. CF(1) is attached to CF(0) by a central stalk formed by the gamma and epsilon chains, while a peripheral stalk is formed by the delta and b chains.

Its subcellular location is the cell inner membrane. It catalyses the reaction ATP + H2O + 4 H(+)(in) = ADP + phosphate + 5 H(+)(out). Produces ATP from ADP in the presence of a proton gradient across the membrane. The alpha chain is a regulatory subunit. The sequence is that of ATP synthase subunit alpha from Glaesserella parasuis serovar 5 (strain SH0165) (Haemophilus parasuis).